Reading from the N-terminus, the 182-residue chain is Translation initiation factor IF-3 (182 aa).

Belongs to the IF-3 family. Monomer.

The protein resides in the cytoplasm. Functionally, IF-3 binds to the 30S ribosomal subunit and shifts the equilibrium between 70S ribosomes and their 50S and 30S subunits in favor of the free subunits, thus enhancing the availability of 30S subunits on which protein synthesis initiation begins. The sequence is that of Translation initiation factor IF-3 from Endomicrobium trichonymphae.